The primary structure comprises 322 residues: tRNA U34 carboxymethyltransferase (322 aa).

Carboxy-S-adenosyl-L-methionine contacts are provided by Lys91, Trp105, Lys110, Gly129, Met195, Tyr199, and Arg314.

It belongs to the class I-like SAM-binding methyltransferase superfamily. CmoB family. Homotetramer.

It catalyses the reaction carboxy-S-adenosyl-L-methionine + 5-hydroxyuridine(34) in tRNA = 5-carboxymethoxyuridine(34) in tRNA + S-adenosyl-L-homocysteine + H(+). Its function is as follows. Catalyzes carboxymethyl transfer from carboxy-S-adenosyl-L-methionine (Cx-SAM) to 5-hydroxyuridine (ho5U) to form 5-carboxymethoxyuridine (cmo5U) at position 34 in tRNAs. In Ectopseudomonas mendocina (strain ymp) (Pseudomonas mendocina), this protein is tRNA U34 carboxymethyltransferase.